The following is a 3401-amino-acid chain: Genome polyprotein (3401 aa).

Residues 1-104 (MPVRPRNKPK…GRKKRRSMTH (104 aa)) are Cytoplasmic-facing. Positions 101 to 117 (SMTHGIILSLGVTMVIG) are cleaved as a propeptide — ER anchor for the capsid protein C, removed in mature form by serine protease NS3. The helical transmembrane segment at 105 to 125 (GIILSLGVTMVIGASLHHHGG) threads the bilayer. Residues 126–240 (RYLLNVTHAD…GERQIQRIER (115 aa)) lie on the Extracellular side of the membrane. N-linked (GlcNAc...) asparagine; by host glycosylation is found at Asn130 and Asn146. A helical membrane pass occupies residues 241–261 (WMMRNPFYAAISLLLAWWVGS). Over 262 to 266 (DIKQK) the chain is Cytoplasmic. A helical membrane pass occupies residues 267–281 (VLIAFLVLAIGPAYS). Over 282–725 (THCVGIPKRD…HTVFGNVFHS (444 aa)) the chain is Extracellular. Intrachain disulfides connect Cys284/Cys311, Cys355/Cys386, Cys373/Cys397, Cys462/Cys564, and Cys581/Cys611. A fusion peptide region spans residues 379–392 (DRGWGNGCGLFGKG). A helical membrane pass occupies residues 726–746 (IFGGLSWITKIILGGMFLWLG). The Extracellular portion of the chain corresponds to 747–753 (VNSRNQT). Residues 754 to 774 (MCMVLMAVGGILLFMTLGVSG) traverse the membrane as a helical segment. Residues 775-1122 (EVGCSLDIKR…NVHEEHLVRS (348 aa)) are Extracellular-facing. Disulfide bonds link Cys778–Cys789, Cys829–Cys916, Cys952–Cys997, Cys1054–Cys1103, Cys1065–Cys1087, and Cys1086–Cys1090. Residues Asn904 and Asn981 are each glycosylated (N-linked (GlcNAc...) asparagine; by host). A helical transmembrane segment spans residues 1123–1143 (WASAGTGMAESSLGLVALFLF). Residues 1144–1198 (TDIFARKRMTRKFMVIGCLGVLSVMIVGGFTALDLIRYIIVVGQHFASMNHGGDV) are Cytoplasmic-facing. The chain crosses the membrane as a helical span at residues 1199–1219 (AYLAIIAVGKLRPGLLMMYSF). Residues 1220–1287 (KAAWSPKERV…PILALLTPLS (68 aa)) are Lumenal-facing. Residues 1288-1308 (MEIIRKTGIFACVGLLGLSLW) form a helical membrane-spanning segment. Residues 1309-1352 (RGGDTTMRKGMPLLAGAATAASGLTRASLSVVFILCATAASRRS) lie on the Cytoplasmic side of the membrane. A helical transmembrane segment spans residues 1353–1373 (WPIGEIMAIVGIVGTGFGMAV). Residues 1374–1376 (NDQ) lie on the Lumenal side of the membrane. The helical transmembrane segment at 1377–1397 (ASLAGPMLVFGLIMIVYATLG) threads the bilayer. At 1398 to 1447 (RADGLTLKRVGDITWEEEAVHSGSSTRYDVTLNEAGEFKLVHEEPVVWSH) the chain is on the cytoplasmic side. The tract at residues 1404-1443 (LKRVGDITWEEEAVHSGSSTRYDVTLNEAGEFKLVHEEPV) is interacts with and activates NS3 protease. The segment at residues 1448–1468 (VVFLVVALIAASVHPIALVVV) is an intramembrane region (helical). Residues 1469–2154 (TIIWTYGKKH…ASTNAPEAVT (686 aa)) are Cytoplasmic-facing. Positions 1481-1661 (GGVLWDIPIA…GGEGVTEEPL (181 aa)) constitute a Peptidase S7 domain. Active-site charge relay system; for serine protease NS3 activity residues include His1532, Asp1556, and Ser1617. The Helicase ATP-binding domain maps to 1665-1821 (ATMLRKGKLT…ESNGEIEDLR (157 aa)). The important for RNA-binding stretch occupies residues 1669 to 1672 (RKGK). Position 1678–1685 (1678–1685 (YHPGAGKT)) interacts with ATP. Positions 1769 to 1772 (DEAH) match the DEAH box motif. Residues 1816–1995 (EIEDLRRDIP…GMVAPLYDVE (180 aa)) form the Helicase C-terminal domain. Residues 2155-2175 (ILLMTGIVVACTLGVGLAFMW) form a helical membrane-spanning segment. Residues 2176 to 2181 (PKGVDK) are Lumenal-facing. Residues 2182-2200 (MSMGMITMSIAGYLMLQGG) constitute an intramembrane region (helical). Residue Leu2201 is a topological domain, lumenal. A helical transmembrane segment spans residues 2202-2222 (TPVQVASVLLIFFIFMVVLIP). At 2223–2235 (EAGTQRSINDNKT) the chain is on the cytoplasmic side. A helical transmembrane segment spans residues 2236–2250 (LYVLLGVALLIGAIT). The Cytoplasmic segment spans residues 2251 to 2285 (ANEMGYLEKTKRDLLGERVQNEWKLELPMFDLRPG). The helical intramembrane region spans 2286-2306 (AAWSIYVGLATLVMPVLDHWI). Residues 2307–2354 (RTEYGSLSLTGIAQQASILQAMDKGVPFFKLNMSVIVLLVSVWNNFSM) are Lumenal-facing. A helical membrane pass occupies residues 2355–2375 (LSVLCGVGLLGVHCAFVLPGL). Over 2376-2418 (RAQAAKQAQRRVYHGVAKNPVVDGQTTAEIETAPEMPPLYEKK) the chain is Cytoplasmic. A helical transmembrane segment spans residues 2419 to 2439 (LALVLLGVVAIANGVMVRSAF). Residues 2440-2467 (SMAETVVLLSAAVGPLLEGNTSAIWNGP) are Lumenal-facing. Residues 2468 to 2488 (MAVAMAGIMRGNYYAGIGLAY) traverse the membrane as a helical segment. The Cytoplasmic segment spans residues 2489 to 3401 (NLWILQSPKR…YSVQEVGTVL (913 aa)). The mRNA cap 0-1 NS5-type MT domain occupies 2499–2763 (GRSTTMTLGE…DVVFPTGTRN (265 aa)). S-adenosyl-L-methionine is bound at residue Ser2554. Ser2554 is subject to Phosphoserine. Lys2559 (for 2'-O-MTase activity) is an active-site residue. S-adenosyl-L-methionine contacts are provided by Gly2584, Trp2585, Thr2602, Leu2603, Asp2629, and Val2630. Asp2644 (for 2'-O-MTase activity) is an active-site residue. Ile2645 contributes to the S-adenosyl-L-methionine binding site. Active-site for 2'-O-MTase activity residues include Lys2680 and Glu2716. An S-adenosyl-L-methionine-binding site is contributed by Tyr2718. A Nuclear localization signal motif is present at residues 2869–2902 (RAIMEVVNKWMFDFLAREKAPRICTKEEFINKVR). The Zn(2+) site is built by Glu2936, His2940, Cys2945, and Cys2948. Residues 3026-3178 (GIMYADDTAG…APLDERFGLA (153 aa)) form the RdRp catalytic domain. Zn(2+) contacts are provided by His3213, Cys3229, and Cys3348.

The protein in the N-terminal section; belongs to the class I-like SAM-binding methyltransferase superfamily. mRNA cap 0-1 NS5-type methyltransferase family. In terms of assembly, homodimer. Interacts (via N-terminus) with host EXOC1 (via C-terminus); this interaction results in EXOC1 degradation through the proteasome degradation pathway. As to quaternary structure, forms heterodimers with envelope protein E in the endoplasmic reticulum and Golgi. Homodimer; in the endoplasmic reticulum and Golgi. Interacts with protein prM. Interacts with non-structural protein 1. In terms of assembly, homodimer; Homohexamer when secreted. Interacts with envelope protein E. NS1 interacts with NS4B. Interacts with host complement protein CFH; this interaction leads to the degradation of C3. As to quaternary structure, interacts (via N-terminus) with serine protease NS3. Forms a heterodimer with serine protease NS3. May form homooligomers. In terms of assembly, forms a heterodimer with NS2B. Interacts with non-structural protein 2A (via N-terminus). Interacts with NS4B. Interacts with unphosphorylated RNA-directed RNA polymerase NS5; this interaction stimulates RNA-directed RNA polymerase NS5 guanylyltransferase activity. NS3 interacts with host PDCD6IP; this interaction contributes to virion release. As to quaternary structure, interacts with serine protease NS3. Homodimer. Interacts with host STAT2; this interaction prevents the establishment of cellular antiviral state. Interacts with serine protease NS3. Interacts with host TRIM23; this interaction leads to NS5 ubiquitination. Specific enzymatic cleavages in vivo yield mature proteins. The nascent capsid protein C contains a C-terminal hydrophobic domain that act as a signal sequence for translocation of prM into the lumen of the ER. Mature capsid protein C is cleaved at a site upstream of this hydrophobic domain by NS3. prM is cleaved in post-Golgi vesicles by a host furin, releasing the mature small envelope protein M, and peptide pr. Non-structural protein 2A-alpha, a C-terminally truncated form of non-structural protein 2A, results from partial cleavage by NS3. Specific enzymatic cleavages in vivo yield mature proteins peptide 2K acts as a signal sequence and is removed from the N-terminus of NS4B by the host signal peptidase in the ER lumen. Signal cleavage at the 2K-4B site requires a prior NS3 protease-mediated cleavage at the 4A-2K site. Post-translationally, cleaved in post-Golgi vesicles by a host furin, releasing the mature small envelope protein M, and peptide pr. This cleavage is incomplete as up to 30% of viral particles still carry uncleaved prM. In terms of processing, N-glycosylated. N-glycosylated. The excreted form is glycosylated and this is required for efficient secretion of the protein from infected cells. Post-translationally, polyubiquitinated; ubiquitination is probably mediated by host TRIM23 and is prerequisite for NS5-STAT2 interaction. NS5 is not ISGylated or sumoylated. In terms of processing, phosphorylated on serines residues. This phosphorylation may trigger NS5 nuclear localization.

The protein resides in the virion. The protein localises to the host nucleus. It is found in the host cytoplasm. Its subcellular location is the host perinuclear region. It localises to the virion membrane. The protein resides in the host endoplasmic reticulum membrane. The protein localises to the secreted. It catalyses the reaction Selective hydrolysis of -Xaa-Xaa-|-Yaa- bonds in which each of the Xaa can be either Arg or Lys and Yaa can be either Ser or Ala.. It carries out the reaction RNA(n) + a ribonucleoside 5'-triphosphate = RNA(n+1) + diphosphate. The catalysed reaction is a ribonucleoside 5'-triphosphate + H2O = a ribonucleoside 5'-diphosphate + phosphate + H(+). The enzyme catalyses ATP + H2O = ADP + phosphate + H(+). It catalyses the reaction a 5'-end (5'-triphosphoguanosine)-ribonucleoside in mRNA + S-adenosyl-L-methionine = a 5'-end (N(7)-methyl 5'-triphosphoguanosine)-ribonucleoside in mRNA + S-adenosyl-L-homocysteine. It carries out the reaction a 5'-end (N(7)-methyl 5'-triphosphoguanosine)-ribonucleoside in mRNA + S-adenosyl-L-methionine = a 5'-end (N(7)-methyl 5'-triphosphoguanosine)-(2'-O-methyl-ribonucleoside) in mRNA + S-adenosyl-L-homocysteine + H(+). In terms of biological role, plays a role in virus budding by binding to the cell membrane and gathering the viral RNA into a nucleocapsid that forms the core of a mature virus particle. During virus entry, may induce genome penetration into the host cytoplasm after hemifusion induced by the surface proteins. Can migrate to the cell nucleus where it modulates host functions. Inhibits RNA silencing by interfering with host Dicer. Its function is as follows. Prevents premature fusion activity of envelope proteins in trans-Golgi by binding to envelope protein E at pH6.0. After virion release in extracellular space, gets dissociated from E dimers. Functionally, acts as a chaperone for envelope protein E during intracellular virion assembly by masking and inactivating envelope protein E fusion peptide. prM is the only viral peptide matured by host furin in the trans-Golgi network probably to avoid catastrophic activation of the viral fusion activity in acidic Golgi compartment prior to virion release. prM-E cleavage is inefficient, and many virions are only partially matured. These uncleaved prM would play a role in immune evasion. In terms of biological role, may play a role in virus budding. Exerts cytotoxic effects by activating a mitochondrial apoptotic pathway through M ectodomain. May display a viroporin activity. Binds to host cell surface receptor and mediates fusion between viral and cellular membranes. Envelope protein is synthesized in the endoplasmic reticulum in the form of heterodimer with protein prM. They play a role in virion budding in the ER, and the newly formed immature particle is covered with 60 spikes composed of heterodimer between precursor prM and envelope protein E. The virion is transported to the Golgi apparatus where the low pH causes dissociation of PrM-E heterodimers and formation of E homodimers. prM-E cleavage is inefficient, and many virions are only partially matured. These uncleaved prM would play a role in immune evasion. Its function is as follows. Involved in immune evasion, pathogenesis and viral replication. Once cleaved off the polyprotein, is targeted to three destinations: the viral replication cycle, the plasma membrane and the extracellular compartment. Essential for viral replication. Required for formation of the replication complex and recruitment of other non-structural proteins to the ER-derived membrane structures. Excreted as a hexameric lipoparticle that plays a role against host immune response. Antagonizing the complement function. Binds to the host macrophages and dendritic cells. Inhibits signal transduction originating from Toll-like receptor 3 (TLR3). Functionally, component of the viral RNA replication complex that functions in virion assembly and antagonizes the host immune response. In terms of biological role, required cofactor for the serine protease function of NS3. May have membrane-destabilizing activity and form viroporins. Displays three enzymatic activities: serine protease, NTPase and RNA helicase. NS3 serine protease, in association with NS2B, performs its autocleavage and cleaves the polyprotein at dibasic sites in the cytoplasm: C-prM, NS2A-NS2B, NS2B-NS3, NS3-NS4A, NS4A-2K and NS4B-NS5. NS3 RNA helicase binds RNA and unwinds dsRNA in the 3' to 5' direction. Also plays a role in virus assembly. Its function is as follows. Regulates the ATPase activity of the NS3 helicase activity. NS4A allows NS3 helicase to conserve energy during unwinding. Functionally, functions as a signal peptide for NS4B and is required for the interferon antagonism activity of the latter. In terms of biological role, induces the formation of ER-derived membrane vesicles where the viral replication takes place. Inhibits interferon (IFN)-induced host STAT1 phosphorylation and nuclear translocation, thereby preventing the establishment of cellular antiviral state by blocking the IFN-alpha/beta pathway. Replicates the viral (+) and (-) RNA genome, and performs the capping of genomes in the cytoplasm. NS5 methylates viral RNA cap at guanine N-7 and ribose 2'-O positions. Besides its role in RNA genome replication, also prevents the establishment of cellular antiviral state by blocking the interferon-alpha/beta (IFN-alpha/beta) signaling pathway. IFN-I induces binding of NS5 to host IFN-activated transcription factor STAT2, preventing its transcriptional activity. Host TRIM23 is the E3 ligase that interacts with and polyubiquitinates NS5 to promote its binding to STAT2 and trigger IFN-I signaling inhibition. The polypeptide is Genome polyprotein (Edge Hill virus (EHV)).